The chain runs to 610 residues: MQVPSPSVREAASMYGTAVAVFLVILVAALQGSAPAESPFPFHIPLDPEGTLELSWNISYAQETIYFQLLVRELKAGVLFGMSDRGELENADLVVLWTDRDGAYFGDAWSDQKGQVHLDSQQDYQLLRAQRTPEGLYLLFKRPFGTCDPNDYLIEDGTVHLVYGFLEEPLRSLESINTSGLHTGLQRVQLLKPSIPKPALPADTRTMEIRAPDVLIPGQQTTYWCYVTELPDGFPRHHIVMYEPIVTEGNEALVHHMEVFQCAAEFETIPHFSGPCDSKMKPQRLNFCRHVLAAWALGAKAFYYPEEAGLAFGGPGSSRFLRLEVHYHNPLVITGRRDSSGIRLYYTAALRRFDAGIMELGLAYTPVMAIPPQETAFVLTGYCTDKCTQLALPASGIHIFASQLHTHLTGRKVVTVLARDGRETEIVNRDNHYSPHFQEIRMLKKVVSVQPGDVLITSCTYNTEDRRLATVGGFGILEEMCVNYVHYYPQTQLELCKSAVDPGFLHKYFRLVNRFNSEEVCTCPQASVPEQFASVPWNSFNREVLKALYGFAPISMHCNRSSAVRFQGEWNRQPLPEIVSRLEEPTPHCPASQAQSPAGPTVLNISGGKG.

Over 1–9 (MQVPSPSVR) the chain is Cytoplasmic. Residues 10–30 (EAASMYGTAVAVFLVILVAAL) form a helical; Signal-anchor for type II membrane protein membrane-spanning segment. The Intragranular segment spans residues 31-610 (QGSAPAESPF…TVLNISGGKG (580 aa)). The DOMON domain maps to 50–166 (GTLELSWNIS…GTVHLVYGFL (117 aa)). 6 disulfide bridges follow: C147-C589, C225-C276, C262-C288, C383-C496, C387-C558, and C459-C481. N-linked (GlcNAc...) asparagine glycosylation is present at N177. Residue Y223 is part of the active site. Cu(2+)-binding residues include H255 and H256. Positions 326, 405, 407, and 480 each coordinate Cu(2+). H405 is an active-site residue. An N-linked (GlcNAc...) asparagine glycan is attached at N559. Positions 585–610 (PTPHCPASQAQSPAGPTVLNISGGKG) are disordered.

It belongs to the copper type II ascorbate-dependent monooxygenase family. Homotetramer; composed of two disulfide-linked dimers. Cu(2+) serves as cofactor. In terms of processing, proteolytic cleavage after the membrane-anchor leads to the release of the soluble form. N-glycosylated. In terms of tissue distribution, detected in chromaffin granules in the adrenal medulla (at protein level). Detected in adrenal medulla.

Its subcellular location is the cytoplasmic vesicle. The protein localises to the secretory vesicle lumen. It is found in the secretory vesicle. The protein resides in the chromaffin granule lumen. It localises to the secretory vesicle membrane. Its subcellular location is the chromaffin granule membrane. It catalyses the reaction dopamine + 2 L-ascorbate + O2 = (R)-noradrenaline + 2 monodehydro-L-ascorbate radical + H2O. It functions in the pathway catecholamine biosynthesis; (R)-noradrenaline biosynthesis; (R)-noradrenaline from dopamine: step 1/1. Functionally, catalyzes the hydroxylation of dopamine to noradrenaline (also known as norepinephrine), and is thus vital for regulation of these neurotransmitters. The protein is Dopamine beta-hydroxylase (DBH) of Bos taurus (Bovine).